The sequence spans 364 residues: S-adenosylmethionine:tRNA ribosyltransferase-isomerase (364 aa).

The disordered stretch occupies residues 344–364 (ASDKMQETSGRGERPRFDHEI).

Belongs to the QueA family. In terms of assembly, monomer.

Its subcellular location is the cytoplasm. It catalyses the reaction 7-aminomethyl-7-carbaguanosine(34) in tRNA + S-adenosyl-L-methionine = epoxyqueuosine(34) in tRNA + adenine + L-methionine + 2 H(+). It functions in the pathway tRNA modification; tRNA-queuosine biosynthesis. Transfers and isomerizes the ribose moiety from AdoMet to the 7-aminomethyl group of 7-deazaguanine (preQ1-tRNA) to give epoxyqueuosine (oQ-tRNA). This is S-adenosylmethionine:tRNA ribosyltransferase-isomerase from Thioalkalivibrio sulfidiphilus (strain HL-EbGR7).